Here is a 291-residue protein sequence, read N- to C-terminus: Transmembrane protein 41B (291 aa).

The disordered stretch occupies residues 1-39 (MAKGRVAERSQLGAHHTTPVGDGAAGTRGLAAPGSRDHQ). Thr-18 is subject to Phosphothreonine. Ser-35 is modified (phosphoserine). 6 helical membrane passes run 52-72 (MSLLILVSIFLSAAFVMFLVY), 109-129 (FYVQVLVAYFATYIFLQTFAI), 147-169 (LALFLVCLCSGLGASFCYMLSYL), 197-217 (LINYIIFLRITPFLPNWFINI), 225-245 (PLKVFFIGTFLGVAPPSFVAI), and 262-282 (SWNSIFILMILAVLSILPAIF). A VTT domain; required for its function in autophagy region spans residues 140–251 (GFLYPFPLAL…FVAIKAGTTL (112 aa)).

Belongs to the TMEM41 family. As to quaternary structure, interacts with VMP1. Interacts with COPA, COPB1, VDAC1 and ERLIN2. Interacts with ATG2A. Interacts with SURF4. (Microbial infection) Interacts with Zika virus NS4A protein and Yellow fever virus NS4B protein.

It is found in the endoplasmic reticulum membrane. The protein localises to the endomembrane system. The protein resides in the cytoplasm. It carries out the reaction a 1,2-diacyl-sn-glycero-3-phospho-L-serine(in) = a 1,2-diacyl-sn-glycero-3-phospho-L-serine(out). The catalysed reaction is cholesterol(in) = cholesterol(out). It catalyses the reaction a 1,2-diacyl-sn-glycero-3-phosphocholine(in) = a 1,2-diacyl-sn-glycero-3-phosphocholine(out). The enzyme catalyses a 1,2-diacyl-sn-glycero-3-phosphoethanolamine(in) = a 1,2-diacyl-sn-glycero-3-phosphoethanolamine(out). In terms of biological role, phospholipid scramblase involved in lipid homeostasis and membrane dynamics processes. Has phospholipid scramblase activity toward cholesterol and phosphatidylserine, as well as phosphatidylethanolamine and phosphatidylcholine. Required for autophagosome formation: participates in early stages of autophagosome biogenesis at the endoplasmic reticulum (ER) membrane by reequilibrating the leaflets of the ER as lipids are extracted by ATG2 (ATG2A or ATG2B) to mediate autophagosome assembly. In addition to autophagy, involved in other processes in which phospholipid scramblase activity is required. Required for normal motor neuron development. Its function is as follows. (Microbial infection) Critical host factor required for infection by human coronaviruses SARS-CoV-2, HCoV-OC43, HCoV-NL63, and HCoV-229E, as well as all flaviviruses tested such as Zika virus and Yellow fever virus. Required post-entry of the virus to facilitate the ER membrane remodeling necessary to form replication organelles. The sequence is that of Transmembrane protein 41B from Homo sapiens (Human).